Reading from the N-terminus, the 325-residue chain is Thiamine-monophosphate kinase (325 aa).

Mg(2+)-binding residues include Asp-30, Ser-45, Thr-46, and Asp-47. His-54 contacts substrate. Mg(2+)-binding residues include Asp-75 and Asp-122. ATP-binding positions include Gly-121–Asp-122 and Arg-146. Asp-212 provides a ligand contact to Mg(2+). Ser-214 lines the ATP pocket. Position 215 (Asp-215) interacts with Mg(2+). Substrate contacts are provided by Glu-263 and Tyr-319.

Belongs to the thiamine-monophosphate kinase family.

The enzyme catalyses thiamine phosphate + ATP = thiamine diphosphate + ADP. The protein operates within cofactor biosynthesis; thiamine diphosphate biosynthesis; thiamine diphosphate from thiamine phosphate: step 1/1. With respect to regulation, is markedly activated by the monovalent cations K(+), NH(4)(+), and Rb(+). Is significantly inhibited by ADP, AMP, p-chloromercuribenzoate, N-ethylmaleimide, pyrophosphate, and EDTA. Functionally, catalyzes the ATP-dependent phosphorylation of thiamine-monophosphate (TMP) to form thiamine-pyrophosphate (TPP), the active form of vitamin B1. Cannot use thiamine as substrate. Is highly specific for ATP as phosphate donor. The chain is Thiamine-monophosphate kinase (thiL) from Escherichia coli (strain K12).